The chain runs to 596 residues: Arginine--tRNA ligase (596 aa).

A 'HIGH' region motif is present at residues 128–138 (ANPTSSLHVGH).

Belongs to the class-I aminoacyl-tRNA synthetase family. In terms of assembly, monomer.

Its subcellular location is the cytoplasm. The catalysed reaction is tRNA(Arg) + L-arginine + ATP = L-arginyl-tRNA(Arg) + AMP + diphosphate. The protein is Arginine--tRNA ligase of Acinetobacter baumannii (strain SDF).